The sequence spans 114 residues: DNA-directed RNA polymerase subunit omega (114 aa).

The protein belongs to the RNA polymerase subunit omega family. In terms of assembly, the RNAP catalytic core consists of 2 alpha, 1 beta, 1 beta' and 1 omega subunit. When a sigma factor is associated with the core the holoenzyme is formed, which can initiate transcription.

The enzyme catalyses RNA(n) + a ribonucleoside 5'-triphosphate = RNA(n+1) + diphosphate. Promotes RNA polymerase assembly. Latches the N- and C-terminal regions of the beta' subunit thereby facilitating its interaction with the beta and alpha subunits. In Novosphingobium aromaticivorans (strain ATCC 700278 / DSM 12444 / CCUG 56034 / CIP 105152 / NBRC 16084 / F199), this protein is DNA-directed RNA polymerase subunit omega.